A 1791-amino-acid polypeptide reads, in one-letter code: Protein TIC 214 (1791 aa).

The next 6 helical transmembrane spans lie at 19–39 (IINSVVVVGLYYGFLTTFSIG), 68–88 (FIAGQLMMFISIYYAPLHLAL), 91–111 (PHTITVLALPYLLFHFFWNNH), 133–153 (VFLNNLIFQLFNHFILPSSML), 176–196 (VGWLIGHILFMKWVGLVLVWI), and 230–250 (IFSILLFITCVYYLGRIPSPI). The segment covering 257 to 271 (GTSETEERGGTKQDQ) has biased composition (basic and acidic residues). Disordered stretches follow at residues 257–278 (GTSETEERGGTKQDQEVSTEEA) and 1498–1521 (ADQGELESDNEKQRNPELALPNQE).

It belongs to the TIC214 family. As to quaternary structure, part of the Tic complex.

It localises to the plastid. It is found in the chloroplast inner membrane. Its function is as follows. Involved in protein precursor import into chloroplasts. May be part of an intermediate translocation complex acting as a protein-conducting channel at the inner envelope. The sequence is that of Protein TIC 214 from Aethionema grandiflorum (Persian stone-cress).